Reading from the N-terminus, the 2615-residue chain is Collagen alpha-5(VI) chain (2615 aa).

Residues 1-18 (MKILLIIFVLIIWTETLA) form the signal peptide. Residues 19–1394 (DQSPGPGPVY…TCCCTFCKCP (1376 aa)) are nonhelical region. VWFA domains lie at 30 to 209 (DVVF…IKDV), 236 to 413 (DLVF…LKKL), 442 to 612 (DIHF…KNEV), 628 to 797 (DIMF…ERKL), 814 to 987 (DVVF…FTLV), 1005 to 1178 (DVIF…KKRI), and 1194 to 1376 (DIVV…KLSQ). Asn-201 and Asn-260 each carry an N-linked (GlcNAc...) asparagine glycan. Residue Asn-835 is glycosylated (N-linked (GlcNAc...) asparagine). Collagen-like domains lie at 1395–1446 (GIPG…GCPG), 1434–1490 (GPQG…KGDP), 1464–1520 (GDDG…PGQN), 1524–1580 (KGQK…TLGA), 1579–1629 (GAEG…LGKK), and 1674–1729 (GDAG…MAGQ). The triple-helical region stretch occupies residues 1395-1728 (GIPGPHGTRG…GQRGIKGMAG (334 aa)). A disordered region spans residues 1404-1693 (GLQAMKGSQG…NPGIPGGPGP (290 aa)). A Cell attachment site motif is present at residues 1430 to 1432 (RGD). Residues 1511-1522 (PGDPGNPGQNNN) show a composition bias toward low complexity. Low complexity-rich tracts occupy residues 1601 to 1611 (SQGQKGPQGSP) and 1622 to 1641 (RPGL…LGPV). The tract at residues 1729-2615 (QPVYSQCDLI…EDKEMEATDI (887 aa)) is nonhelical region. VWFA domains are found at residues 1758–1965 (ELVF…MDVV), 1963–2154 (DVVF…AKFL), and 2291–2487 (DVAF…VKPF). Asn-2509 carries an N-linked (GlcNAc...) asparagine glycan.

This sequence belongs to the type VI collagen family. In terms of assembly, trimers composed of three different chains: alpha-1(VI), alpha-2(VI), and alpha-3(VI) or alpha-5(VI) or alpha-6(VI). Prolines at the third position of the tripeptide repeating unit (G-X-Y) are hydroxylated in some or all of the chains. Expressed in skin, followed by lung, small intestine, colon and testis. In skin, it is expressed in the epidermis with strongest staining in suprabasal viable layers. In ATOD patients, it is absent in the most differentiated upper spinous and granular layers (at protein level).

The protein resides in the secreted. Its subcellular location is the extracellular space. The protein localises to the extracellular matrix. In terms of biological role, collagen VI acts as a cell-binding protein. The chain is Collagen alpha-5(VI) chain (COL6A5) from Homo sapiens (Human).